The primary structure comprises 273 residues: NH(3)-dependent NAD(+) synthetase (273 aa).

An ATP-binding site is contributed by 46-53 (GISGGQDS). Asp52 contacts Mg(2+). Arg139 lines the deamido-NAD(+) pocket. Thr159 serves as a coordination point for ATP. Glu164 serves as a coordination point for Mg(2+). Deamido-NAD(+) is bound by residues Lys172 and Asp179. Residues Lys188 and Thr210 each coordinate ATP. Residue 259–260 (HK) participates in deamido-NAD(+) binding.

Belongs to the NAD synthetase family. In terms of assembly, homodimer.

It carries out the reaction deamido-NAD(+) + NH4(+) + ATP = AMP + diphosphate + NAD(+) + H(+). Its pathway is cofactor biosynthesis; NAD(+) biosynthesis; NAD(+) from deamido-NAD(+) (ammonia route): step 1/1. In terms of biological role, catalyzes the ATP-dependent amidation of deamido-NAD to form NAD. Uses ammonia as a nitrogen source. In Streptococcus agalactiae serotype Ia (strain ATCC 27591 / A909 / CDC SS700), this protein is NH(3)-dependent NAD(+) synthetase.